The primary structure comprises 199 residues: Large ribosomal subunit protein bL25 (199 aa).

It belongs to the bacterial ribosomal protein bL25 family. CTC subfamily. In terms of assembly, part of the 50S ribosomal subunit; part of the 5S rRNA/L5/L18/L25 subcomplex. Contacts the 5S rRNA. Binds to the 5S rRNA independently of L5 and L18.

Functionally, this is one of the proteins that binds to the 5S RNA in the ribosome where it forms part of the central protuberance. The polypeptide is Large ribosomal subunit protein bL25 (Pseudomonas fluorescens (strain ATCC BAA-477 / NRRL B-23932 / Pf-5)).